A 504-amino-acid polypeptide reads, in one-letter code: Xylose import ATP-binding protein XylG (504 aa).

ABC transporter domains follow at residues 5-242 (LEMK…VGRE) and 259-500 (LRVE…VMEA). 37-44 (GENGSGKS) is an ATP binding site.

This sequence belongs to the ABC transporter superfamily. Xylose importer (TC 3.A.1.2.4) family. As to quaternary structure, the complex is composed of two ATP-binding proteins (XylG), two transmembrane proteins (XylH) and a solute-binding protein (XylF).

The protein resides in the cell inner membrane. It catalyses the reaction D-xylose(out) + ATP + H2O = D-xylose(in) + ADP + phosphate + H(+). Part of the ABC transporter complex XylFGH involved in xylose import. Responsible for energy coupling to the transport system. In Histophilus somni (strain 129Pt) (Haemophilus somnus), this protein is Xylose import ATP-binding protein XylG.